The following is a 71-amino-acid chain: Protein KleB (71 aa).

The segment at residues 9–28 (VTTNCRRCGKSISTLSRSLI) is a DNA-binding region (H-T-H motif).

The chain is Protein KleB (kleB) from Escherichia coli.